The chain runs to 132 residues: Small ribosomal subunit protein uS8 (132 aa).

Belongs to the universal ribosomal protein uS8 family. As to quaternary structure, part of the 30S ribosomal subunit. Contacts proteins S5 and S12.

In terms of biological role, one of the primary rRNA binding proteins, it binds directly to 16S rRNA central domain where it helps coordinate assembly of the platform of the 30S subunit. The protein is Small ribosomal subunit protein uS8 of Acidobacterium capsulatum (strain ATCC 51196 / DSM 11244 / BCRC 80197 / JCM 7670 / NBRC 15755 / NCIMB 13165 / 161).